We begin with the raw amino-acid sequence, 346 residues long: Probable RNA methyltransferase PA14_40730 (346 aa).

The active-site Proton acceptor is the Glu91. The Radical SAM core domain occupies 94–320 (LLPRGGLCVS…TKVRNSAGQD (227 aa)). Cys101 and Cys325 are oxidised to a cystine. Cys108, Cys112, and Cys115 together coordinate [4Fe-4S] cluster. S-adenosyl-L-methionine contacts are provided by residues 153–154 (GE), Ser183, 206–208 (SLH), and Asn282. Cys325 (S-methylcysteine intermediate) is an active-site residue.

This sequence belongs to the radical SAM superfamily. RlmN family. It depends on [4Fe-4S] cluster as a cofactor.

It is found in the cytoplasm. The protein is Probable RNA methyltransferase PA14_40730 of Pseudomonas aeruginosa (strain UCBPP-PA14).